Consider the following 605-residue polypeptide: Protein spinster (605 aa).

Residues 1–94 are disordered; that stretch reads MSLKHQKQSY…HPLGEHHHIP (94 aa). A compositionally biased stretch (low complexity) spans 27 to 38; the sequence is SSGSSGSSSSEE. A compositionally biased stretch (polar residues) spans 55–67; it reads TTYSSQQLMPSDT. The segment covering 76–85 has biased composition (basic residues); the sequence is RLRPHHHHHH. A helical membrane pass occupies residues 115 to 137; it reads FTVTVLCFVNLINYMDRFTIAGV. Asn-149 is a glycosylation site (N-linked (GlcNAc...) asparagine). A run of 5 helical transmembrane segments spans residues 153-173, 180-200, 203-223, 240-260, and 271-291; these read GLLQTVFVISYMVCAPIFGYL, PWIMAVGVGLWSTTTLLGSFM, FGWFIAFRALVGIGEASYSTI, MLALFYFAIPVGSGLGYIVGS, and WALRVTPILGIVAVFLILLIK. Asn-319 is a glycosylation site (N-linked (GlcNAc...) asparagine). Transmembrane regions (helical) follow at residues 329-349, 367-387, 401-421, 431-451, and 465-485; these read FTCVAFVAGALAWWGPSFIYL, FNFGVITMLAGLLGVPLGSFL, VICAFGLLVSAPLLTGACLLV, LIFFGQLALNLNWAIVADILL, and FQILISHALGDAGSPYLVGAI. A glycan (N-linked (GlcNAc...) asparagine) is linked at Asn-519. Residues 558–578 form a helical membrane-spanning segment; that stretch reads STSFVEVLGGIFFIFTACFII. Asn-583 is a glycosylation site (N-linked (GlcNAc...) asparagine).

The protein belongs to the major facilitator superfamily. Spinster (TC 2.A.1.49) family. Enriched in brain (at protein level).

It is found in the late endosome membrane. Its subcellular location is the lysosome membrane. Its function is as follows. Probable sphingolipid transporter that plays a central role in endosomes and/or lysosomes storage. Involved in TGF-beta-mediated synaptic growth regulation both pre- and postsynaptically via its function in endosomal storage regulation. Also required during oogenesis by regulating yolk spheres storage. This chain is Protein spinster (spin), found in Drosophila melanogaster (Fruit fly).